The following is a 417-amino-acid chain: Voltage-gated ClC-type chloride channel ClcB (417 aa).

A run of 10 helical transmembrane segments spans residues 5-25 (LLIA…FRHA), 54-74 (LITP…WQKM), 146-166 (LWIA…PLAG), 168-188 (LFIA…PVVV), 222-242 (VMIV…MWLM), 258-278 (WQLA…PTVW), 288-308 (FLLS…KILA), 316-336 (GAPG…GMFL), 349-371 (EIAI…HAPI), and 380-400 (MTGE…ASVL).

The protein belongs to the chloride channel (TC 2.A.49) family. ClcB subfamily.

Its subcellular location is the cell inner membrane. Functionally, probably acts as an electrical shunt for an outwardly-directed proton pump that is linked to amino acid decarboxylation, as part of the extreme acid resistance (XAR) response. In Salmonella dublin (strain CT_02021853), this protein is Voltage-gated ClC-type chloride channel ClcB.